A 269-amino-acid chain; its full sequence is Indole-3-glycerol phosphate synthase (269 aa).

It belongs to the TrpC family.

It catalyses the reaction 1-(2-carboxyphenylamino)-1-deoxy-D-ribulose 5-phosphate + H(+) = (1S,2R)-1-C-(indol-3-yl)glycerol 3-phosphate + CO2 + H2O. It participates in amino-acid biosynthesis; L-tryptophan biosynthesis; L-tryptophan from chorismate: step 4/5. In Streptomyces griseus subsp. griseus (strain JCM 4626 / CBS 651.72 / NBRC 13350 / KCC S-0626 / ISP 5235), this protein is Indole-3-glycerol phosphate synthase.